A 543-amino-acid chain; its full sequence is uncharacterized protein (543 aa).

Transmembrane regions (helical) follow at residues 47 to 67 (FSLL…PSLV), 79 to 99 (GGMV…AFAL), 126 to 146 (AFLS…GFAS), 176 to 196 (IYVA…KFLA), 198 to 218 (FSSF…ISLA), and 249 to 269 (FILC…CATI). The N-linked (GlcNAc...) asparagine glycan is linked to N275. The next 3 helical transmembrane spans lie at 282-302 (IAII…MITI), 335-355 (AVGV…ALCL), and 384-404 (IPLN…LLML). N406 carries N-linked (GlcNAc...) asparagine glycosylation. 3 helical membrane-spanning segments follow: residues 410-430 (ISSI…LPLV), 452-472 (ISIV…FPSY), and 480-500 (MNWA…YYYL). N519 carries an N-linked (GlcNAc...) asparagine glycan.

The protein belongs to the amino acid-polyamine-organocation (APC) superfamily.

It is found in the membrane. This is an uncharacterized protein from Schizosaccharomyces pombe (strain 972 / ATCC 24843) (Fission yeast).